The chain runs to 365 residues: Phosphate acyltransferase (365 aa).

The protein belongs to the PlsX family. Homodimer. Probably interacts with PlsY.

It localises to the cytoplasm. It carries out the reaction a fatty acyl-[ACP] + phosphate = an acyl phosphate + holo-[ACP]. The protein operates within lipid metabolism; phospholipid metabolism. In terms of biological role, catalyzes the reversible formation of acyl-phosphate (acyl-PO(4)) from acyl-[acyl-carrier-protein] (acyl-ACP). This enzyme utilizes acyl-ACP as fatty acyl donor, but not acyl-CoA. The protein is Phosphate acyltransferase of Jannaschia sp. (strain CCS1).